Reading from the N-terminus, the 229-residue chain is Orotidine 5'-phosphate decarboxylase (229 aa).

Substrate-binding positions include Asp10, Lys32, 59-68, Thr119, Arg180, Gln189, Gly209, and Arg210; that span reads DLKFHDIPNT. Lys61 (proton donor) is an active-site residue.

The protein belongs to the OMP decarboxylase family. Type 1 subfamily. As to quaternary structure, homodimer.

It carries out the reaction orotidine 5'-phosphate + H(+) = UMP + CO2. Its pathway is pyrimidine metabolism; UMP biosynthesis via de novo pathway; UMP from orotate: step 2/2. Catalyzes the decarboxylation of orotidine 5'-monophosphate (OMP) to uridine 5'-monophosphate (UMP). This Legionella pneumophila (strain Corby) protein is Orotidine 5'-phosphate decarboxylase.